The following is a 356-amino-acid chain: Tyrosine recombinase XerS (356 aa).

The Core-binding (CB) domain maps to 16-121 (TMPWYILEYY…ALSSLYKYLT (106 aa)). A Tyr recombinase domain is found at 169–354 (EFLQYIDREY…VNDEQKNALN (186 aa)). Catalysis depends on residues arginine 210, lysine 234, histidine 306, arginine 309, and histidine 332. Residue tyrosine 341 is the O-(3'-phospho-DNA)-tyrosine intermediate of the active site.

The protein belongs to the 'phage' integrase family. XerS subfamily.

It localises to the cytoplasm. Its activity is regulated as follows. FtsK is required for recombination. Functionally, site-specific tyrosine recombinase, which acts by catalyzing the cutting and rejoining of the recombining DNA molecules. Essential to convert dimers of the bacterial chromosome into monomers to permit their segregation at cell division. This is Tyrosine recombinase XerS from Streptococcus gordonii (strain Challis / ATCC 35105 / BCRC 15272 / CH1 / DL1 / V288).